The primary structure comprises 198 residues: Putative pseudouridine methyltransferase (198 aa).

S-adenosyl-L-methionine-binding residues include Met132 and Cys186.

The protein belongs to the methyltransferase superfamily. TrmY family.

It localises to the cytoplasm. The polypeptide is Putative pseudouridine methyltransferase (Shewanella baltica (strain OS223)).